The chain runs to 229 residues: Mediator of RNA polymerase II transcription subunit 7 (229 aa).

This sequence belongs to the Mediator complex subunit 7 family. In terms of assembly, component of the Mediator complex.

It localises to the nucleus. In terms of biological role, component of the Mediator complex, a coactivator involved in the regulated transcription of nearly all RNA polymerase II-dependent genes. Mediator functions as a bridge to convey information from gene-specific regulatory proteins to the basal RNA polymerase II transcription machinery. Mediator is recruited to promoters by direct interactions with regulatory proteins and serves as a scaffold for the assembly of a functional preinitiation complex with RNA polymerase II and the general transcription factors. The polypeptide is Mediator of RNA polymerase II transcription subunit 7 (med7) (Xenopus tropicalis (Western clawed frog)).